We begin with the raw amino-acid sequence, 448 residues long: Trigger factor (448 aa).

In terms of domain architecture, PPIase FKBP-type spans 172 to 257 (GDRVTVDFVG…MKKIEWPHLP (86 aa)).

Belongs to the FKBP-type PPIase family. Tig subfamily.

The protein localises to the cytoplasm. It catalyses the reaction [protein]-peptidylproline (omega=180) = [protein]-peptidylproline (omega=0). Functionally, involved in protein export. Acts as a chaperone by maintaining the newly synthesized protein in an open conformation. Functions as a peptidyl-prolyl cis-trans isomerase. This Paraburkholderia xenovorans (strain LB400) protein is Trigger factor.